The following is a 159-amino-acid chain: Phosphopantetheine adenylyltransferase (159 aa).

A substrate-binding site is contributed by Ser9. Residues 9-10 and His17 each bind ATP; that span reads SF. Residues Lys41, Leu74, and Lys88 each contribute to the substrate site. Residues 89–91, Glu99, and 123–129 each bind ATP; these read GLR and YLHLSST.

It belongs to the bacterial CoaD family. Homohexamer. It depends on Mg(2+) as a cofactor.

It localises to the cytoplasm. It carries out the reaction (R)-4'-phosphopantetheine + ATP + H(+) = 3'-dephospho-CoA + diphosphate. It participates in cofactor biosynthesis; coenzyme A biosynthesis; CoA from (R)-pantothenate: step 4/5. In terms of biological role, reversibly transfers an adenylyl group from ATP to 4'-phosphopantetheine, yielding dephospho-CoA (dPCoA) and pyrophosphate. The polypeptide is Phosphopantetheine adenylyltransferase (Arthrobacter sp. (strain FB24)).